The sequence spans 163 residues: Small ribosomal subunit protein bS18c (163 aa).

Disordered regions lie at residues 1-52 and 144-163; these read MYIS…IGPG and NLRN…SSDC. Over residues 7-48 the composition is skewed to basic residues; that stretch reads PFRKSKQPFRKSKQTFHKSKQPFRKFKQPFRKSKQPFRRRSR.

Belongs to the bacterial ribosomal protein bS18 family. In terms of assembly, part of the 30S ribosomal subunit.

It is found in the plastid. The protein resides in the chloroplast. The protein is Small ribosomal subunit protein bS18c of Sorghum bicolor (Sorghum).